The primary structure comprises 25 residues: C-type natriuretic peptide (25 aa).

Cys9 and Cys25 form a disulfide bridge.

As to expression, venom gland.

The protein resides in the secreted. In terms of biological role, snake venom natriuretic peptide that has a vasorelaxant activity in rat aortic strips and a diuretic potency in anesthetized rats. May act by activating natriuretic receptors (NPR1 and/or NPR2). This is C-type natriuretic peptide from Crotalus atrox (Western diamondback rattlesnake).